Here is a 103-residue protein sequence, read N- to C-terminus: Small ribosomal subunit protein uS10 (103 aa).

The protein belongs to the universal ribosomal protein uS10 family. Part of the 30S ribosomal subunit.

Functionally, involved in the binding of tRNA to the ribosomes. The polypeptide is Small ribosomal subunit protein uS10 (Polynucleobacter necessarius subsp. necessarius (strain STIR1)).